Reading from the N-terminus, the 532-residue chain is Putative F-box/LRR-repeat protein At3g42770 (532 aa).

The region spanning 1-46 (MNCLPDELLVQILSFLPTKEATSTSLLSKRWRTLFTLSPNLDFDNS) is the F-box domain. 3 LRR repeats span residues 113–135 (VSEL…IFTS), 279–305 (IRNV…EIPM), and 398–420 (MNDL…SPKL).

This Arabidopsis thaliana (Mouse-ear cress) protein is Putative F-box/LRR-repeat protein At3g42770.